The sequence spans 534 residues: Calcium-dependent protein kinase 18 (534 aa).

Residues 1 to 49 form a disordered region; it reads MGLCFSSPKATRRGTGSRNPNPDSPTQGKASEKVSNKNKKNTKKIQLRH. The N-myristoyl glycine moiety is linked to residue Gly2. Polar residues predominate over residues 14–29; the sequence is GTGSRNPNPDSPTQGK. Basic residues predominate over residues 36–47; the sequence is NKNKKNTKKIQL. The Protein kinase domain occupies 71-331; that stretch reads YTIGKLLGHG…AAQALSHSWV (261 aa). Residues 77 to 85 and Lys100 each bind ATP; that span reads LGHGQFGFT. Catalysis depends on Asp197, which acts as the Proton acceptor. Phosphoserine is present on Ser237. The autoinhibitory domain stretch occupies residues 337-367; the sequence is ASEVPIDISVLNNMRQFVKFSRLKQIALRAL. EF-hand domains follow at residues 374–409, 411–446, 453–488, and 491–518; these read DELD…DVPW, LKDA…VNQL, KWQQ…KGSI, and LLEE…ASLK. The Ca(2+) site is built by Asp387, Asp389, Asn391, Ser393, Glu398, Asp424, Asn426, Asp428, Glu435, Asp466, Asp468, Asp470, Glu477, Asp496, Asp498, Asp500, and Arg502. At Ser504 the chain carries Phosphoserine. Ca(2+) is bound at residue Glu507.

It belongs to the protein kinase superfamily. Ser/Thr protein kinase family. CDPK subfamily.

The protein localises to the membrane. The catalysed reaction is L-seryl-[protein] + ATP = O-phospho-L-seryl-[protein] + ADP + H(+). The enzyme catalyses L-threonyl-[protein] + ATP = O-phospho-L-threonyl-[protein] + ADP + H(+). Its activity is regulated as follows. Activated by calcium. Autophosphorylation may play an important role in the regulation of the kinase activity. Functionally, may play a role in signal transduction pathways that involve calcium as a second messenger. The polypeptide is Calcium-dependent protein kinase 18 (CPK18) (Arabidopsis thaliana (Mouse-ear cress)).